The following is a 246-amino-acid chain: Sortase B (246 aa).

The helical transmembrane segment at 5–24 (SFLGKSLTLVVLGVFLFSGW) threads the bilayer.

Belongs to the bacterial sortase family. Class B subfamily.

The protein resides in the cell membrane. Transpeptidase that anchors surface proteins to the cell wall. Recognizes and modifies its substrate by proteolytic cleavage of a C-terminal sorting signal. Following cleavage, a covalent intermediate is formed via a thioester bond between the sortase and its substrate, which is then transferred and covalently attached to the cell wall. Catalyzes a cell wall sorting reaction in which a surface protein with the consensus sorting signal NP(Q/K)(T/S)(N/G/S)(D/A) is cleaved between the fourth and fifth residues, and the fourth position is linked to the cell wall. This is not the major sortase in Listeria, it seems to anchor only 2 proteins, Hbp2 (SvpA) and Hbp1. The protein is Sortase B of Listeria monocytogenes serovar 1/2a (strain ATCC BAA-679 / EGD-e).